The following is a 267-amino-acid chain: NAD kinase (267 aa).

The active-site Proton acceptor is the D45. NAD(+) is bound by residues 45-46, 122-123, R148, D150, 161-166, A185, and Q223; these read DG, NE, and TAYNKS.

This sequence belongs to the NAD kinase family. It depends on a divalent metal cation as a cofactor.

It is found in the cytoplasm. It carries out the reaction NAD(+) + ATP = ADP + NADP(+) + H(+). In terms of biological role, involved in the regulation of the intracellular balance of NAD and NADP, and is a key enzyme in the biosynthesis of NADP. Catalyzes specifically the phosphorylation on 2'-hydroxyl of the adenosine moiety of NAD to yield NADP. This Levilactobacillus brevis (strain ATCC 367 / BCRC 12310 / CIP 105137 / JCM 1170 / LMG 11437 / NCIMB 947 / NCTC 947) (Lactobacillus brevis) protein is NAD kinase.